Here is a 173-residue protein sequence, read N- to C-terminus: Translation initiation factor IF-3 (173 aa).

This sequence belongs to the IF-3 family. In terms of assembly, monomer.

The protein localises to the cytoplasm. IF-3 binds to the 30S ribosomal subunit and shifts the equilibrium between 70S ribosomes and their 50S and 30S subunits in favor of the free subunits, thus enhancing the availability of 30S subunits on which protein synthesis initiation begins. The polypeptide is Translation initiation factor IF-3 (Methylobacterium sp. (strain 4-46)).